The primary structure comprises 683 residues: Transforming growth factor-beta-induced protein ig-h3 (683 aa).

The first 23 residues, 1 to 23 (MALFVRLLALALALALGPAATLA), serve as a signal peptide directing secretion. Serine 37 is subject to Phosphoserine. The EMI domain maps to 45-99 (GPNVCAVQKVIGTNRKYFTNCKQWYQRKICGKSTVISYECCPGYEKVPGERSCPA). 5 disulfide bridges follow: cysteine 49-cysteine 85, cysteine 74-cysteine 339, cysteine 84-cysteine 97, cysteine 214-cysteine 317, and cysteine 473-cysteine 478. S-cysteinyl cysteine is present on cysteine 65. FAS1 domains lie at 103–236 (LANL…DKVI), 240–371 (TNNI…DELL), 375–498 (SAKT…DRML), and 502–632 (SGTV…TSVL). Residues 642–644 (RGD) carry the Cell attachment site motif.

As to quaternary structure, binds to type I, II, and IV collagens. In terms of processing, gamma-carboxylation is controversial. Gamma-carboxyglutamated; gamma-carboxyglutamate residues are formed by vitamin K dependent carboxylation; this may be required for calcium binding. According to a more recent report, does not contain vitamin K-dependent gamma-carboxyglutamate residues. Post-translationally, the EMI domain contains 2 expected intradomain disulfide bridges (Cys-49-Cys85 and Cys-84-Cys-97) and one unusual interdomain disulfide bridge to the second FAS1 domain (Cys-74-Cys-339). This arrangement violates the predicted disulfide bridge pattern of an EMI domain. As to expression, located primarily in the epithelium of normal adult cornea, in fetal stromal cells, and both endothelium- and stroma-derived cells in healing corneal wounds. Not expressed in normal adult endothelium and stroma.

The protein localises to the secreted. It localises to the extracellular space. The protein resides in the extracellular matrix. Its function is as follows. Plays a role in cell adhesion. May play a role in cell-collagen interactions. In Oryctolagus cuniculus (Rabbit), this protein is Transforming growth factor-beta-induced protein ig-h3 (TGFBI).